The chain runs to 132 residues: Small ribosomal subunit protein uS11 (132 aa).

It belongs to the universal ribosomal protein uS11 family. As to quaternary structure, part of the 30S ribosomal subunit.

In terms of biological role, located on the platform of the 30S subunit. The protein is Small ribosomal subunit protein uS11 of Sulfurisphaera tokodaii (strain DSM 16993 / JCM 10545 / NBRC 100140 / 7) (Sulfolobus tokodaii).